Here is a 207-residue protein sequence, read N- to C-terminus: Ribosomal RNA small subunit methyltransferase G (207 aa).

S-adenosyl-L-methionine contacts are provided by residues Gly73, Leu78, 124–125 (VE), and Arg139.

It belongs to the methyltransferase superfamily. RNA methyltransferase RsmG family.

It localises to the cytoplasm. It catalyses the reaction guanosine(527) in 16S rRNA + S-adenosyl-L-methionine = N(7)-methylguanosine(527) in 16S rRNA + S-adenosyl-L-homocysteine. Functionally, specifically methylates the N7 position of guanine in position 527 of 16S rRNA. This chain is Ribosomal RNA small subunit methyltransferase G, found in Salmonella arizonae (strain ATCC BAA-731 / CDC346-86 / RSK2980).